A 312-amino-acid polypeptide reads, in one-letter code: Ribosomal protein L11 methyltransferase (312 aa).

Threonine 163, glycine 184, aspartate 206, and asparagine 248 together coordinate S-adenosyl-L-methionine.

Belongs to the methyltransferase superfamily. PrmA family.

It localises to the cytoplasm. The enzyme catalyses L-lysyl-[protein] + 3 S-adenosyl-L-methionine = N(6),N(6),N(6)-trimethyl-L-lysyl-[protein] + 3 S-adenosyl-L-homocysteine + 3 H(+). In terms of biological role, methylates ribosomal protein L11. This Clostridium kluyveri (strain NBRC 12016) protein is Ribosomal protein L11 methyltransferase.